The chain runs to 621 residues: Cyclic nucleotide-gated ion channel 11 (621 aa).

Topologically, residues 1–43 (MNLQRRKFVRLDSTGVDGKLKSVRGRLKKVYGKMKTLENWRKT) are cytoplasmic. A helical transmembrane segment spans residues 44–64 (VLLACVVALAIDPLFLFIPLI). The Extracellular portion of the chain corresponds to 65 to 76 (DSQRFCFTFDKT). Residues 77 to 97 (LVAVVCVIRTFIDTFYVIHII) form a helical membrane-spanning segment. The Cytoplasmic portion of the chain corresponds to 98 to 128 (YYLITETIAPRSQASLRGEIVVHSKATLKTR). A helical transmembrane segment spans residues 129–149 (LLFHFIVDIISVLPIPQVVVL). Topologically, residues 150-162 (TLIPLSASLVSER) are extracellular. Residues 163 to 183 (ILKWIILSQYVPRIIRMYPLY) traverse the membrane as a helical segment. The Cytoplasmic portion of the chain corresponds to 184–198 (KEVTRAFGTVAESKR). A helical transmembrane segment spans residues 199 to 219 (VGAALNFFLYMLHSYVCGAFW). Topologically, residues 220 to 329 (YLSSIERKST…QNLETSNSAG (110 aa)) are extracellular. Residues 330–350 (EIFFAIIICVSGLLLFAVLIG) form a helical membrane-spanning segment. At 351–621 (NVQKYLQSST…KLNLGAAIYA (271 aa)) the chain is on the cytoplasmic side. A nucleoside 3',5'-cyclic phosphate-binding positions include 435–556 (LLQA…HSKQ) and D506. The tract at residues 549–564 (YRRLHSKQLQHMFRFY) is calmodulin-binding. The IQ domain maps to 569-598 (QTWAACFIQAAWKRHCRRKLSKALREEEGK).

The protein belongs to the cyclic nucleotide-gated cation channel (TC 1.A.1.5) family. As to quaternary structure, homotetramer or heterotetramer.

It is found in the cell membrane. In terms of biological role, putative cyclic nucleotide-gated ion channel. The protein is Cyclic nucleotide-gated ion channel 11 (CNGC11) of Arabidopsis thaliana (Mouse-ear cress).